Consider the following 353-residue polypeptide: GTPase Obg (353 aa).

The Obg domain occupies 1–159 (MRFVDEVVIN…RVIRLELKLL (159 aa)). The OBG-type G domain occupies 160 to 334 (ADVGLLGMPN…LCTAIMQELT (175 aa)). GTP is bound by residues 166-173 (GMPNAGKS), 191-195 (FTTLH), 213-216 (DIPG), 284-287 (NKMD), and 315-317 (SAA). Mg(2+)-binding residues include S173 and T193.

Belongs to the TRAFAC class OBG-HflX-like GTPase superfamily. OBG GTPase family. In terms of assembly, monomer. The cofactor is Mg(2+).

The protein localises to the cytoplasm. Functionally, an essential GTPase which binds GTP, GDP and possibly (p)ppGpp with moderate affinity, with high nucleotide exchange rates and a fairly low GTP hydrolysis rate. Plays a role in control of the cell cycle, stress response, ribosome biogenesis and in those bacteria that undergo differentiation, in morphogenesis control. The polypeptide is GTPase Obg (Dichelobacter nodosus (strain VCS1703A)).